The primary structure comprises 201 residues: Large ribosomal subunit protein eL15 (201 aa).

The protein belongs to the eukaryotic ribosomal protein eL15 family.

This Quercus suber (Cork oak) protein is Large ribosomal subunit protein eL15 (RPL15).